Reading from the N-terminus, the 1488-residue chain is DNA polymerase alpha catalytic subunit (1488 aa).

Disordered regions lie at residues 1–22 (MSES…GRFA), 79–124 (LRDF…TGKA), and 236–325 (FFSS…ESED). Acidic residues predominate over residues 83-93 (FEDEDEYSDGE). The Nuclear localization signal motif lies at 96-103 (RKDSKKKK). Basic residues predominate over residues 99–113 (SKKKKGVAPNSKKRP). Residue serine 239 is modified to Phosphoserine. Basic and acidic residues predominate over residues 242–258 (IKKEPMPEKTPAKKATE). The segment covering 260–278 (PFSDNEMDFSCLDDDENQF) has biased composition (acidic residues). 2 positions are modified to phosphoserine: serine 262 and serine 269. The segment covering 286 to 303 (TEKVSQTKTAAEKTSQSK) has biased composition (polar residues). Residues 304 to 325 (VAEKSAPKKETTGSPKESESED) show a composition bias toward basic and acidic residues. A Phosphothreonine modification is found at threonine 314. The residue at position 317 (serine 317) is a Phosphoserine. The tract at residues 638 to 758 (DSERALLSWF…DLLEMYEKGE (121 aa)) is contains conserved residues essential for 3' -&gt; 5' exonuclease activities. DNA-binding regions lie at residues 675-734 (QIVA…CKQV) and 1255-1380 (PTKF…RKKS). Zn(2+)-binding residues include cysteine 1296, cysteine 1299, cysteine 1324, cysteine 1329, cysteine 1362, cysteine 1367, cysteine 1385, and cysteine 1388. The CysA-type zinc finger occupies 1296–1327 (CVTCKTEQLMASAYRPGPSNSHIAVLQQCAKS). The CysB motif signature appears at 1362–1388 (CDHPDCNFNTRTHSLRKKSHRPLCQKC).

Belongs to the DNA polymerase type-B family. Component of the alpha DNA polymerase complex (also known as the alpha DNA polymerase-primase complex) consisting of four subunits: the catalytic subunit PolA1, the regulatory subunit PolA2, and the primase complex subunits Prim1 and Prim2 respectively. PolA1 associates with the DNA primase complex before association with PolA2. Interacts with Dpit47; the interaction inhibits the activity of the DNA polymerase and occurs only in proliferating cells but not in quiescent cells. In embryos, a cleaved form of 130 kDa is produced up to cycle 14 and then disappears. Expressed in embryos (at protein level).

It is found in the nucleus. It catalyses the reaction DNA(n) + a 2'-deoxyribonucleoside 5'-triphosphate = DNA(n+1) + diphosphate. Its activity is regulated as follows. Inhibited by N2-(p-n-butylphenyl) deoxyguanosine 5'-triphosphate and N2-(p-n-butylphenyl) deoxyadenosine 5'-triphosphate. DNA synthesis is not inhibited by fungal toxin alpha-amaitin. The 3'-5' exonuclease activity is inhibited by 10mM dGMP. In terms of biological role, catalytic subunit of the DNA polymerase alpha complex (also known as the alpha DNA polymerase-primase complex) which plays an essential role in the initiation of DNA synthesis. During the S phase of the cell cycle, the DNA polymerase alpha complex (composed of a catalytic subunit PolA1, an accessory subunit PolA2 and two primase subunits, the catalytic subunit Prim1 and the regulatory subunit Prim2) is recruited to DNA at the replicative forks. The primase subunit of the polymerase alpha complex initiates DNA synthesis by oligomerising short RNA primers on both leading and lagging strands. These primers are initially extended by the polymerase alpha catalytic subunit and subsequently transferred to polymerase delta and polymerase epsilon for processive synthesis on the lagging and leading strand, respectively. In addition to polymerase activity, exhibits 3' to 5' exonuclease activity. The protein is DNA polymerase alpha catalytic subunit of Drosophila melanogaster (Fruit fly).